A 448-amino-acid polypeptide reads, in one-letter code: Phosphoglucosamine mutase (448 aa).

S100 (phosphoserine intermediate) is an active-site residue. Residues S100, D240, D242, and D244 each contribute to the Mg(2+) site. S100 carries the post-translational modification Phosphoserine.

It belongs to the phosphohexose mutase family. Mg(2+) serves as cofactor. In terms of processing, activated by phosphorylation.

It carries out the reaction alpha-D-glucosamine 1-phosphate = D-glucosamine 6-phosphate. Its function is as follows. Catalyzes the conversion of glucosamine-6-phosphate to glucosamine-1-phosphate. The sequence is that of Phosphoglucosamine mutase from Bacillus pumilus (strain SAFR-032).